Consider the following 217-residue polypeptide: Cytidylate kinase (217 aa).

10–18 (GPAGAGKST) lines the ATP pocket.

It belongs to the cytidylate kinase family. Type 1 subfamily.

Its subcellular location is the cytoplasm. It catalyses the reaction CMP + ATP = CDP + ADP. The catalysed reaction is dCMP + ATP = dCDP + ADP. In Clostridium botulinum (strain Langeland / NCTC 10281 / Type F), this protein is Cytidylate kinase.